The sequence spans 188 residues: Peptide deformylase (188 aa).

Residues 70-90 (AEPVACDHDGHHHHHQPTKKE) form a disordered region. Fe cation is bound by residues cysteine 113 and histidine 155. Glutamate 156 is a catalytic residue. Histidine 159 lines the Fe cation pocket.

It belongs to the polypeptide deformylase family. It depends on Fe(2+) as a cofactor.

The catalysed reaction is N-terminal N-formyl-L-methionyl-[peptide] + H2O = N-terminal L-methionyl-[peptide] + formate. Functionally, removes the formyl group from the N-terminal Met of newly synthesized proteins. Requires at least a dipeptide for an efficient rate of reaction. N-terminal L-methionine is a prerequisite for activity but the enzyme has broad specificity at other positions. The sequence is that of Peptide deformylase from Novosphingobium aromaticivorans (strain ATCC 700278 / DSM 12444 / CCUG 56034 / CIP 105152 / NBRC 16084 / F199).